Here is a 167-residue protein sequence, read N- to C-terminus: Protein-export protein SecB (167 aa).

The protein belongs to the SecB family. Homotetramer, a dimer of dimers. One homotetramer interacts with 1 SecA dimer.

Its subcellular location is the cytoplasm. Its function is as follows. One of the proteins required for the normal export of preproteins out of the cell cytoplasm. It is a molecular chaperone that binds to a subset of precursor proteins, maintaining them in a translocation-competent state. It also specifically binds to its receptor SecA. The protein is Protein-export protein SecB of Wolbachia pipientis wMel.